Consider the following 381-residue polypeptide: N-acetyldiaminopimelate deacetylase (381 aa).

D71 is a catalytic residue. The Proton acceptor role is filled by E130.

The protein belongs to the peptidase M20A family. N-acetyldiaminopimelate deacetylase subfamily.

The catalysed reaction is N-acetyl-(2S,6S)-2,6-diaminopimelate + H2O = (2S,6S)-2,6-diaminopimelate + acetate. It participates in amino-acid biosynthesis; L-lysine biosynthesis via DAP pathway; LL-2,6-diaminopimelate from (S)-tetrahydrodipicolinate (acetylase route): step 3/3. Its function is as follows. Catalyzes the conversion of N-acetyl-diaminopimelate to diaminopimelate and acetate. The protein is N-acetyldiaminopimelate deacetylase of Ligilactobacillus salivarius (strain UCC118) (Lactobacillus salivarius).